The chain runs to 292 residues: 4-hydroxy-tetrahydrodipicolinate synthase (292 aa).

Position 45 (T45) interacts with pyruvate. Y134 functions as the Proton donor/acceptor in the catalytic mechanism. Catalysis depends on K162, which acts as the Schiff-base intermediate with substrate. Position 204 (V204) interacts with pyruvate.

It belongs to the DapA family. In terms of assembly, homotetramer; dimer of dimers.

The protein localises to the cytoplasm. It carries out the reaction L-aspartate 4-semialdehyde + pyruvate = (2S,4S)-4-hydroxy-2,3,4,5-tetrahydrodipicolinate + H2O + H(+). Its pathway is amino-acid biosynthesis; L-lysine biosynthesis via DAP pathway; (S)-tetrahydrodipicolinate from L-aspartate: step 3/4. In terms of biological role, catalyzes the condensation of (S)-aspartate-beta-semialdehyde [(S)-ASA] and pyruvate to 4-hydroxy-tetrahydrodipicolinate (HTPA). This chain is 4-hydroxy-tetrahydrodipicolinate synthase, found in Marinobacter nauticus (strain ATCC 700491 / DSM 11845 / VT8) (Marinobacter aquaeolei).